A 24-amino-acid polypeptide reads, in one-letter code: Ascaphin-2 (24 aa).

Expressed by the skin glands.

Its subcellular location is the secreted. In terms of biological role, antimicrobial peptide that shows higher potency against Gram-negative bacteria than against Gram-positive bacteria. Has a very week hemolytic activity. In Ascaphus truei (Coastal tailed frog), this protein is Ascaphin-2.